Consider the following 287-residue polypeptide: Bifunctional protein FolD (287 aa).

NADP(+) contacts are provided by residues 160–162, S189, and T230; that span reads GRS.

The protein belongs to the tetrahydrofolate dehydrogenase/cyclohydrolase family. Homodimer.

The catalysed reaction is (6R)-5,10-methylene-5,6,7,8-tetrahydrofolate + NADP(+) = (6R)-5,10-methenyltetrahydrofolate + NADPH. It carries out the reaction (6R)-5,10-methenyltetrahydrofolate + H2O = (6R)-10-formyltetrahydrofolate + H(+). It functions in the pathway one-carbon metabolism; tetrahydrofolate interconversion. In terms of biological role, catalyzes the oxidation of 5,10-methylenetetrahydrofolate to 5,10-methenyltetrahydrofolate and then the hydrolysis of 5,10-methenyltetrahydrofolate to 10-formyltetrahydrofolate. The chain is Bifunctional protein FolD from Chlamydia trachomatis serovar D (strain ATCC VR-885 / DSM 19411 / UW-3/Cx).